A 94-amino-acid chain; its full sequence is NADH-ubiquinone oxidoreductase 10.5 kDa subunit (94 aa).

It belongs to the complex I NDUFA2 subunit family. In terms of assembly, complex I is composed of about 40 different subunits.

Its subcellular location is the mitochondrion inner membrane. Functionally, accessory subunit of the mitochondrial membrane respiratory chain NADH dehydrogenase (Complex I), that is believed not to be involved in catalysis. Complex I functions in the transfer of electrons from NADH to the respiratory chain. The immediate electron acceptor for the enzyme is believed to be ubiquinone. The chain is NADH-ubiquinone oxidoreductase 10.5 kDa subunit (nuo-10.5) from Neurospora crassa (strain ATCC 24698 / 74-OR23-1A / CBS 708.71 / DSM 1257 / FGSC 987).